A 115-amino-acid polypeptide reads, in one-letter code: Nucleoid-associated protein Pro_0020 (115 aa).

Belongs to the YbaB/EbfC family. Homodimer.

Its subcellular location is the cytoplasm. The protein resides in the nucleoid. In terms of biological role, binds to DNA and alters its conformation. May be involved in regulation of gene expression, nucleoid organization and DNA protection. The protein is Nucleoid-associated protein Pro_0020 of Prochlorococcus marinus (strain SARG / CCMP1375 / SS120).